Consider the following 477-residue polypeptide: uncharacterized protein (477 aa).

A helical membrane pass occupies residues 107–129 (VNFWSLSMACASVLALLGLVYLI).

It localises to the membrane. This is an uncharacterized protein from Treponema pallidum (strain Nichols).